A 467-amino-acid chain; its full sequence is Multiple inositol polyphosphate phosphatase 1 (467 aa).

The signal sequence occupies residues 1–15; it reads MRLLILLLLPLVAIA. Residue His67 is part of the active site. Residues Asn120, Asn159, and Asn234 are each glycosylated (N-linked (GlcNAc...) asparagine). Gly441 carries GPI-anchor amidated glycine lipidation. A propeptide spans 442-467 (removed in mature form); sequence GAPSLGSGVGGLLATTLAAMLVYLMH.

The protein belongs to the histidine acid phosphatase family. MINPP1 subfamily. In terms of processing, N-glycosylated.

It localises to the cell membrane. It is found in the apical cell membrane. The protein resides in the basolateral cell membrane. Its subcellular location is the cell projection. The protein localises to the filopodium. It localises to the cell junction. The enzyme catalyses (2R)-2,3-bisphosphoglycerate + H2O = (2R)-2-phosphoglycerate + phosphate. The catalysed reaction is 1D-myo-inositol hexakisphosphate + H2O = 1D-myo-inositol 1,2,4,5,6-pentakisphosphate + phosphate. It carries out the reaction 1D-myo-inositol 1,2,4,5,6-pentakisphosphate + H2O = 1D-myo-inositol 1,2,5,6-tetrakisphosphate + phosphate. It catalyses the reaction 1D-myo-inositol 1,2,5,6-tetrakisphosphate + H2O = 1D-myo-inositol 1,2,6-trisphosphate + phosphate. Functionally, probable multiple inositol polyphosphate phosphatase that hydrolyzes 1D-myo-inositol 1,3,4,5,6-pentakisphosphate (InsP5[2OH]) and 1D-myo-inositol hexakisphosphate (InsP6) to a range of less phosphorylated inositol phosphates. This regulates the availability of these various small molecule second messengers and metal chelators which control many aspects of cell physiology. May have a dual substrate specificity, and function as a 2,3-bisphosphoglycerate 3-phosphatase hydrolyzing 2,3-bisphosphoglycerate to 2-phosphoglycerate. 2,3-bisphosphoglycerate (BPG) is formed as part of the Rapoport-Luebering glycolytic bypass. Has a role in embryonic tracheal development where it localizes to the leading edge of actively migrating branches. In these leading cells, enhances formation and/or maintenance of filopodia which may drive branch migration and elongation by cell-cell intercalation. The function in tracheal morphogenesis is dependent on its inositol polyphosphate phosphatase activity. The polypeptide is Multiple inositol polyphosphate phosphatase 1 (Drosophila melanogaster (Fruit fly)).